The following is a 1257-amino-acid chain: LIM domain kinase 1 (1257 aa).

A disordered region spans residues Met1–Pro24. Residues Met1–Cys147 form an interaction with LATS1 region. Residues Gly11–Pro24 show a composition bias toward gly residues. LIM zinc-binding domains are found at residues Pro31 to Asp93 and Ala94 to Gln154. Residues Leu174–Pro274 form the PDZ domain. Residues Leu401–Leu686 enclose the Protein kinase domain. ATP is bound by residues Leu407–Val415 and Lys430. Residue Asp522 is part of the active site. 3 disordered regions span residues Leu552–Arg587, Gln759–Leu811, and Glu881–Arg900. Residues Gln794–Leu811 show a composition bias toward basic and acidic residues. At Ser1000 the chain carries Phosphoserine. Disordered stretches follow at residues Ala1010–Leu1037, Ser1085–His1182, and Ala1212–Cys1257. Polar residues-rich tracts occupy residues Ser1085–His1095 and Arg1113–Val1125. Low complexity-rich tracts occupy residues Ser1126–Thr1137 and Thr1145–Gln1166.

It belongs to the protein kinase superfamily. TKL Ser/Thr protein kinase family. In terms of assembly, interacts with LATS1, and this interaction inhibits phosphorylation of tsr/cofilin. Phosphorylated on serine and/or threonine residues by ROCK1. Phosphorylated by PAK4 resulting in increased LIMK1 ability to phosphorylate cofilin. May be dephosphorylated and inactivated by SSH1. In terms of tissue distribution, expressed throughout the imaginal disks of the eye, leg and wing.

Its subcellular location is the cytoplasm. The protein localises to the cleavage furrow. The protein resides in the midbody. The enzyme catalyses L-seryl-[protein] + ATP = O-phospho-L-seryl-[protein] + ADP + H(+). The catalysed reaction is L-threonyl-[protein] + ATP = O-phospho-L-threonyl-[protein] + ADP + H(+). Protein kinase which regulates actin filament dynamics. Phosphorylates and inactivates the actin binding/depolymerizing factor tsr/cofilin, thereby stabilizing the actin cytoskeleton. Modulation of actin cytoskeleton dynamics may be essential for imaginal disk morphogenesis and axon guidance. In Drosophila melanogaster (Fruit fly), this protein is LIM domain kinase 1 (LIMK1).